Consider the following 470-residue polypeptide: GDP-Man:Man(3)GlcNAc(2)-PP-Dol alpha-1,2-mannosyltransferase (470 aa).

Topologically, residues 1 to 15 are lumenal; sequence MSDTVISLISHSITT. Residues 16–36 traverse the membrane as a helical segment; that stretch reads VFYLVPLIIALIIPFSLYSGF. Residues 37–131 are Cytoplasmic-facing; it reads RRKSKTVAFF…HYKHCTMLFQ (95 aa). An intramembrane region (helical) is located at residues 132–152; sequence ALAGLILALEAWFRMVPAVFI. Residues 153–378 are Cytoplasmic-facing; that stretch reads DSMGYPLSLP…ISIHTMHNEH (226 aa). The helical intramembrane region spans 379 to 399; sequence FGISVVEAMAASTIILSNDSG. Residues 400 to 470 lie on the Cytoplasmic side of the membrane; sequence GPRMDIVKDY…HWNKEIEKVL (71 aa).

This sequence belongs to the glycosyltransferase group 1 family. Glycosyltransferase 4 subfamily.

The protein resides in the endoplasmic reticulum membrane. The enzyme catalyses an alpha-D-Man-(1-&gt;3)-[alpha-D-Man-(1-&gt;6)]-beta-D-Man-(1-&gt;4)-beta-D-GlcNAc-(1-&gt;4)-alpha-D-GlcNAc-diphospho-di-trans,poly-cis-dolichol + 2 GDP-alpha-D-mannose = an alpha-D-Man-(1-&gt;2)-alpha-D-Man-(1-&gt;2)-alpha-D-Man-(1-&gt;3)-[alpha-D-Man-(1-&gt;6)]-beta-D-Man-(1-&gt;4)-beta-D-GlcNAc-(1-&gt;4)-alpha-D-GlcNAc-diphospho-di-trans,poly-cis-dolichol + 2 GDP + 2 H(+). It functions in the pathway protein modification; protein glycosylation. GDP-Man:Man(3)GlcNAc(2)-PP-Dol alpha-1,2-mannosyltransferase that operates in the biosynthetic pathway of dolichol-linked oligosaccharides, the glycan precursors employed in protein asparagine (N)-glycosylation. The assembly of dolichol-linked oligosaccharides begins on the cytosolic side of the endoplasmic reticulum membrane and finishes in its lumen. The sequential addition of sugars to dolichol pyrophosphate produces dolichol-linked oligosaccharides containing fourteen sugars, including two GlcNAcs, nine mannoses and three glucoses. Once assembled, the oligosaccharide is transferred from the lipid to nascent proteins by oligosaccharyltransferases. Catalyzes, on the cytoplasmic face of the endoplasmic reticulum, the addition of the fourth and fifth mannose residues to the dolichol-linked oligosaccharide chain, to produce Man(5)GlcNAc(2)-PP-dolichol core oligosaccharide. Man(5)GlcNAc(2)-PP-dolichol is a substrate for ALG3, the following enzyme in the biosynthetic pathway. The polypeptide is GDP-Man:Man(3)GlcNAc(2)-PP-Dol alpha-1,2-mannosyltransferase (Caenorhabditis elegans).